The sequence spans 255 residues: Triosephosphate isomerase (255 aa).

Residue 15–17 (NWK) participates in substrate binding. His-100 serves as the catalytic Electrophile. Glu-172 serves as the catalytic Proton acceptor. Substrate contacts are provided by residues Gly-178, Ser-218, and 239 to 240 (GG).

This sequence belongs to the triosephosphate isomerase family. Homodimer.

It is found in the cytoplasm. It catalyses the reaction D-glyceraldehyde 3-phosphate = dihydroxyacetone phosphate. The protein operates within carbohydrate biosynthesis; gluconeogenesis. Its pathway is carbohydrate degradation; glycolysis; D-glyceraldehyde 3-phosphate from glycerone phosphate: step 1/1. Involved in the gluconeogenesis. Catalyzes stereospecifically the conversion of dihydroxyacetone phosphate (DHAP) to D-glyceraldehyde-3-phosphate (G3P). The protein is Triosephosphate isomerase of Clostridium tetani (strain Massachusetts / E88).